Here is a 499-residue protein sequence, read N- to C-terminus: MINIRPDEISNIIRQQIESYDQEVQIDNVGTVLQIGDGIARVYGLEQVMAGELLEFDDSTVGIALNLENDNVGAVLMGPGLGILEGSAVRSTGKIAQVPVGDAFLGRVVNSLAKPIDGKGDIPASETRLVESMAPGIITRKSVCEPVQTGITAIDSMIPIGRGQRELIIGDRQTGKTSVAIDTIINQKTEDVICVYVAIGQKASSVAGVVSTLEDKGALGYTIIVAANADEPATLQYIAPYTGAALAEYFMYKGKATVIVYDDLTKQASAYRQMSLLLRRPPGREAYPGDVFYLHSRLLERAAKLSDALGGGSMTALPIIETQAGDVSAYIPTNVISITDGQIFLSGDLFNSGIRPAINVGISVSRVGSAAQTKAMKQVAGKLKLELAQFAELEAFSQFASDLDAATQAELARGVRLREMLKQKQNSPISVEEQVAIIYAGINGYLDTIPVSEVKGFVEKLRSYLRNSAPQFISSIQSEKKLSPENEELLKKILTDLKG.

170 to 177 serves as a coordination point for ATP; the sequence is GDRQTGKT.

Belongs to the ATPase alpha/beta chains family. As to quaternary structure, F-type ATPases have 2 components, CF(1) - the catalytic core - and CF(0) - the membrane proton channel. CF(1) has five subunits: alpha(3), beta(3), gamma(1), delta(1), epsilon(1). CF(0) has four main subunits: a, b, b' and c.

It is found in the plastid. It localises to the chloroplast thylakoid membrane. It carries out the reaction ATP + H2O + 4 H(+)(in) = ADP + phosphate + 5 H(+)(out). Produces ATP from ADP in the presence of a proton gradient across the membrane. The alpha chain is a regulatory subunit. This chain is ATP synthase subunit alpha, chloroplastic, found in Emiliania huxleyi (Coccolithophore).